We begin with the raw amino-acid sequence, 321 residues long: Tetraacyldisaccharide 4'-kinase (321 aa).

54–61 contributes to the ATP binding site; it reads SVGGTGKT.

This sequence belongs to the LpxK family.

The catalysed reaction is a lipid A disaccharide + ATP = a lipid IVA + ADP + H(+). It functions in the pathway glycolipid biosynthesis; lipid IV(A) biosynthesis; lipid IV(A) from (3R)-3-hydroxytetradecanoyl-[acyl-carrier-protein] and UDP-N-acetyl-alpha-D-glucosamine: step 6/6. Functionally, transfers the gamma-phosphate of ATP to the 4'-position of a tetraacyldisaccharide 1-phosphate intermediate (termed DS-1-P) to form tetraacyldisaccharide 1,4'-bis-phosphate (lipid IVA). The protein is Tetraacyldisaccharide 4'-kinase of Rickettsia africae (strain ESF-5).